The chain runs to 825 residues: Exocyst complex component SEC10a (825 aa).

Residues 244-266 are a coiled coil; sequence RGLEVAVANLQDYCNELENRLLS.

The protein belongs to the SEC10 family. In terms of assembly, the exocyst complex is composed of SEC3, SEC5, SEC6, SEC8, SEC10, EXO70A1 and EXO84B. Interacts with EXO84B. Binds to EXO70E2. Binds directly to B1L. In terms of tissue distribution, expressed in seedlings, roots, leaves and flowers.

It localises to the cytoplasm. The protein localises to the cytosol. The protein resides in the secreted. It is found in the extracellular exosome. In terms of biological role, component of the exocyst complex involved in the docking of exocytic vesicles with fusion sites on the plasma membrane during regulated or polarized secretion. Involved in polarized cell growth and organ morphogenesis. During cytokinesis, involved in cell plate initiation, cell plate maturation and formation of new primary cell wall. The polypeptide is Exocyst complex component SEC10a (Arabidopsis thaliana (Mouse-ear cress)).